Consider the following 903-residue polypeptide: FIGNL1-interacting regulator of recombination and mitosis (903 aa).

Phosphoserine is present on residues S101 and S795. K843 carries the N6-acetyllysine modification.

As to quaternary structure, interacts (via its N-terminal region) with PLK1; controls PLK1 kinase activity. Interacts (via the KVVXF motif) with PPP1CC; controls PLK1 kinase activity. Interacts with FIGNL1; may regulate homologous recombination. Phosphorylation at Ser-101 by PLK1 strengthens FIRRM-PLK1 interaction. Phosphorylation at Ser-795 by PLK1 negatively regulates its interaction with PPP1CC.

It localises to the chromosome. It is found in the centromere. The protein resides in the kinetochore. The protein localises to the nucleus. Its subcellular location is the midbody. It localises to the cytoplasm. It is found in the cytoskeleton. The protein resides in the spindle. Its function is as follows. Regulates PLK1 kinase activity at kinetochores and promotes faithful chromosome segregation in prometaphase by bridging kinase and phosphatase activities. Phosphorylation of FIRRM by PLK1 negatively regulates its interaction with the phosphatase, PPP1CC, thus creating a negative feedback loop for maintaining proper PLK1 kinase activity during mitosis. In complex with FIGL1 may regulate homologous recombination. This Mus musculus (Mouse) protein is FIGNL1-interacting regulator of recombination and mitosis.